Reading from the N-terminus, the 729-residue chain is Putative cyclic nucleotide-gated ion channel 19 (729 aa).

Topologically, residues methionine 1–valine 172 are cytoplasmic. The disordered stretch occupies residues serine 52–proline 82. The segment covering proline 67–valine 81 has biased composition (low complexity). Residues leucine 173–isoleucine 193 traverse the membrane as a helical segment. Residues glutamine 194–lysine 208 lie on the Extracellular side of the membrane. The helical transmembrane segment at valine 209–phenylalanine 229 threads the bilayer. Topologically, residues arginine 230–lysine 261 are cytoplasmic. The chain crosses the membrane as a helical span at residues phenylalanine 262–proline 282. Over leucine 283–glutamine 295 the chain is Extracellular. The helical transmembrane segment at isoleucine 296–leucine 316 threads the bilayer. The Cytoplasmic segment spans residues alanine 317 to asparagine 332. The chain crosses the membrane as a helical span at residues phenylalanine 333–leucine 353. At serine 354–serine 451 the chain is on the extracellular side. The chain crosses the membrane as a helical span at residues tyrosine 452–alanine 472. Residues arginine 473–arginine 729 are Cytoplasmic-facing. A nucleoside 3',5'-cyclic phosphate contacts are provided by residues isoleucine 560–leucine 677 and glutamate 625. Residues phenylalanine 678 to glutamate 694 are calmodulin-binding. In terms of domain architecture, IQ spans arginine 699–asparagine 728.

It belongs to the cyclic nucleotide-gated cation channel (TC 1.A.1.5) family. As to quaternary structure, homotetramer or heterotetramer.

Its subcellular location is the cell membrane. Functionally, putative cyclic nucleotide-gated ion channel. This Arabidopsis thaliana (Mouse-ear cress) protein is Putative cyclic nucleotide-gated ion channel 19 (CNGC19).